Consider the following 460-residue polypeptide: Bifunctional protein GlmU (460 aa).

Residues 1-229 form a pyrophosphorylase region; that stretch reads MKNYAIILAA…FDESLGVNDR (229 aa). UDP-N-acetyl-alpha-D-glucosamine-binding positions include 8–11, Lys22, Gln72, and 77–78; these read LAAG and GT. Position 102 (Asp102) interacts with Mg(2+). The UDP-N-acetyl-alpha-D-glucosamine site is built by Gly139, Glu154, Asn169, and Asn227. Asn227 contacts Mg(2+). The tract at residues 230-250 is linker; that stretch reads LALAQAEVIMQERINKQHMLN. The tract at residues 251–460 is N-acetyltransferase; it reads GVTLQNPAAT…RLPHHPDQPQ (210 aa). Residues Arg332 and Lys350 each contribute to the UDP-N-acetyl-alpha-D-glucosamine site. The Proton acceptor role is filled by His362. 2 residues coordinate UDP-N-acetyl-alpha-D-glucosamine: Tyr365 and Asn376. Residues Ala379, 385–386, Ser404, Ala422, and Arg439 contribute to the acetyl-CoA site; that span reads NY.

It in the N-terminal section; belongs to the N-acetylglucosamine-1-phosphate uridyltransferase family. The protein in the C-terminal section; belongs to the transferase hexapeptide repeat family. Homotrimer. The cofactor is Mg(2+).

Its subcellular location is the cytoplasm. The enzyme catalyses alpha-D-glucosamine 1-phosphate + acetyl-CoA = N-acetyl-alpha-D-glucosamine 1-phosphate + CoA + H(+). The catalysed reaction is N-acetyl-alpha-D-glucosamine 1-phosphate + UTP + H(+) = UDP-N-acetyl-alpha-D-glucosamine + diphosphate. It participates in nucleotide-sugar biosynthesis; UDP-N-acetyl-alpha-D-glucosamine biosynthesis; N-acetyl-alpha-D-glucosamine 1-phosphate from alpha-D-glucosamine 6-phosphate (route II): step 2/2. Its pathway is nucleotide-sugar biosynthesis; UDP-N-acetyl-alpha-D-glucosamine biosynthesis; UDP-N-acetyl-alpha-D-glucosamine from N-acetyl-alpha-D-glucosamine 1-phosphate: step 1/1. The protein operates within bacterial outer membrane biogenesis; LPS lipid A biosynthesis. Its function is as follows. Catalyzes the last two sequential reactions in the de novo biosynthetic pathway for UDP-N-acetylglucosamine (UDP-GlcNAc). The C-terminal domain catalyzes the transfer of acetyl group from acetyl coenzyme A to glucosamine-1-phosphate (GlcN-1-P) to produce N-acetylglucosamine-1-phosphate (GlcNAc-1-P), which is converted into UDP-GlcNAc by the transfer of uridine 5-monophosphate (from uridine 5-triphosphate), a reaction catalyzed by the N-terminal domain. In Streptococcus equi subsp. zooepidemicus (strain ATCC 35246 / C74-63), this protein is Bifunctional protein GlmU.